Reading from the N-terminus, the 917-residue chain is Dolichyl-phosphooligosaccharide-protein glycotransferase (917 aa).

Residues 1-10 (MTENNEKVKN) are compositionally biased toward basic and acidic residues. A disordered region spans residues 1-20 (MTENNEKVKNSDSANNQSSK). Residues 1-38 (MTENNEKVKNSDSANNQSSKNSKFNFNFEDKKVKCAKT) lie on the Cytoplasmic side of the membrane. The span at 11 to 20 (SDSANNQSSK) shows a compositional bias: low complexity. Residues 39-59 (ILIIIFLAFLSFQMRAQTADM) traverse the membrane as a helical segment. The Extracellular portion of the chain corresponds to 60–154 (GFTTNEQYLD…AMDSTVTLMN (95 aa)). The short motif at 82-84 (ALD) is the DXD motif 1 element. A Mn(2+)-binding site is contributed by Asp84. A helical transmembrane segment spans residues 155–175 (AAFWVPAILSMFLITPIFFTV). Topologically, residues 176–182 (RRITSSD) are cytoplasmic. A helical transmembrane segment spans residues 183 to 203 (IGGAVAAILASLSPSIFVKTV). Residues 204-209 (AGFSDT) are Extracellular-facing. A Mn(2+)-binding site is contributed by Asp208. The short motif at 208-210 (DTP) is the DXD motif 2 element. A helical membrane pass occupies residues 210–230 (PILEILPLLFIVWFIIEAIHY). At 231–237 (SKEKNYK) the chain is on the cytoplasmic side. A helical transmembrane segment spans residues 238 to 260 (SLIYGLLATLMLALYPFMWSAWW). The Extracellular portion of the chain corresponds to 261-263 (YGY). Residues 264–286 (YIVIAFLVIYAIYKGISYNSIAK) traverse the membrane as a helical segment. Over 287 to 308 (YTKSKNNNHKDKIESEKLEMLN) the chain is Cytoplasmic. A helical membrane pass occupies residues 309-329 (ILKISGLFIIGGAVLITALYG). At 330–372 (VSTTMNALQAPLNYLGLDEVSSQTGWPNVLTTVSELDTASLDE) the chain is on the extracellular side. The TIXE motif signature appears at 361–364 (TVSE). Glu364 is a binding site for Mn(2+). Residues 373–393 (IISSSLGSIHLFAIGLIGIFL) form a helical membrane-spanning segment. At 394–413 (SLFRKVLTPVKQISNGLAEK) the chain is on the cytoplasmic side. A helical transmembrane segment spans residues 414–434 (LDIKYALLLIIWFAVTFLAAS). The Extracellular segment spans residues 435 to 438 (KGVR). Arg438 is an a glycophospholipid binding site. A helical membrane pass occupies residues 439-459 (FVALMVPPLSIGVGIFVGFIE). Topologically, residues 460–469 (QFIKNNLDKK) are cytoplasmic. A helical transmembrane segment spans residues 470–490 (YEYVAYPTIAIIVLYALFTIY). Over 491–506 (RADSADLVRMLLPSNY) the chain is Extracellular. The chain crosses the membrane as a helical span at residues 507 to 527 (VPIAEGIMLASLAVLIIYKVA). The Cytoplasmic portion of the chain corresponds to 528 to 541 (ELIAESNKKLVMNK). A helical transmembrane segment spans residues 542–562 (IFMILLAIGLITPTIATIVPF). Over 563–917 (YSVPTYNDGW…FSVDYGNYSK (355 aa)) the chain is Extracellular. The interacts with target acceptor peptide in protein substrate stretch occupies residues 592-594 (WWD). The WWDYG motif motif lies at 592–596 (WWDNG). The MI motif motif lies at 719 to 726 (MTSIASVW).

It belongs to the STT3 family. Mn(2+) serves as cofactor. Mg(2+) is required as a cofactor.

The protein localises to the cell membrane. The catalysed reaction is an archaeal dolichyl phosphooligosaccharide + [protein]-L-asparagine = an archaeal dolichyl phosphate + a glycoprotein with the oligosaccharide chain attached by N-beta-D-glycosyl linkage to a protein L-asparagine.. It participates in cell surface structure biogenesis; S-layer biogenesis. Its pathway is protein modification; protein glycosylation. Its function is as follows. Oligosaccharyl transferase (OST) that catalyzes the initial transfer of a defined glycan (ManNAcGlc-2,3-diNAcAGlcNAc in M.voltae) from the lipid carrier dolichol-monophosphate to an asparagine residue within an Asn-X-Ser/Thr consensus motif in nascent polypeptide chains, the first step in protein N-glycosylation. Involved in the assembly of an N-linked disaccharide that decorates the S-layer glycoprotein and flagellins. This chain is Dolichyl-phosphooligosaccharide-protein glycotransferase, found in Methanococcus voltae.